The following is a 622-amino-acid chain: MSTENKQSLPAITLAAIGVVYGDIGTSPLYTLRECLSGQFGFGVERDAVFGFLSLIFWLLIFVVSIKYLTFVMRADNAGEGGILTLMSLAGRNTSARTTSMLVIMGLIGGSFFYGEVVITPAISVMSAIEGLEIVAPQLDTWIVPLSIIVLTLLFMIQKHGTAMVGKLFAPIMLTWFLILAGLGLRSIIANPEVLHALNPMWAVHFFLEYKTVSFIALGAVVLSITGVEALYADMGHFGKFPIRLAWFTVVLPSLTLNYFGQGALLLKNPEAIKNPFFLLAPDWALIPLLIIAALATVIASQAVISGVFSLTRQAVRLGYLSPMRIIHTSEMESGQIYIPFVNWMLYVAVVIVIVSFEHSSNLAAAYGIAVTGTMVLTSILSTTVARQNWHWNKYFVALILIAFLCVDIPLFTANLDKLLSGGWLPLSLGTVMFIVMTTWKSERFRLLRRMHEHGNSLEAMIASLEKSPPVRVPGTAVYMSRAINVIPFALMHNLKHNKVLHERVILLTLRTEDAPYVHNVRRVQIEQLSPTFWRVVASYGWRETPNVEEVFHRCGLEGLSCRMMETSFFMSHESLILGKRPWYLRLRGKLYLLLQRNALRAPDQFEIPPNRVIELGTQVEI.

A run of 12 helical transmembrane segments spans residues 9–29 (LPAITLAAIGVVYGDIGTSPL), 49–69 (VFGFLSLIFWLLIFVVSIKYL), 103–123 (VIMGLIGGSFFYGEVVITPAI), 137–157 (PQLDTWIVPLSIIVLTLLFMI), 165–185 (VGKLFAPIMLTWFLILAGLGL), 213–233 (VSFIALGAVVLSITGVEALYA), 247–267 (WFTVVLPSLTLNYFGQGALLL), 276–296 (PFFLLAPDWALIPLLIIAALA), 337–357 (IYIPFVNWMLYVAVVIVIVSF), 363–383 (LAAAYGIAVTGTMVLTSILST), 396–416 (FVALILIAFLCVDIPLFTANL), and 419–439 (LLSGGWLPLSLGTVMFIVMTT).

It belongs to the HAK/KUP transporter (TC 2.A.72) family.

It localises to the cell inner membrane. The catalysed reaction is K(+)(in) + H(+)(in) = K(+)(out) + H(+)(out). Functionally, responsible for the low-affinity transport of potassium into the cell. Likely operates as a K(+):H(+) symporter. This Escherichia fergusonii (strain ATCC 35469 / DSM 13698 / CCUG 18766 / IAM 14443 / JCM 21226 / LMG 7866 / NBRC 102419 / NCTC 12128 / CDC 0568-73) protein is Low affinity potassium transport system protein Kup.